A 292-amino-acid chain; its full sequence is MNAFDPDIAEDAGSDGCHPLFRDVPTTVEFNKLRKRLLRLTRQAIEDFSMVKPGERWMVCLSGGKDSYGLLALLLDLKWRGLLPVELLAVNLDQGQPNFPKHILPDFLNRYEIEHRIEYQDTYSIVTDKLPETSTYCSLCSRLRRGNLYRIAREEGCSAIVLGHHREDILETFFMNLFHGGRLAAMPPKLLNDEGDLMVFRPLAYAAEDDLEKFATAMQFPIIPCDLCGSQEGLQRNAMKAMLTDIEKRMPGRKDTMIRAMTNVRPSHLLDRKLFDFAGLMLNGEGEGDHAV.

Residues 62–67 carry the PP-loop motif motif; that stretch reads SGGKDS. Cysteine 137, cysteine 140, and cysteine 228 together coordinate [4Fe-4S] cluster.

Belongs to the TtcA family. In terms of assembly, homodimer. Requires Mg(2+) as cofactor. It depends on [4Fe-4S] cluster as a cofactor.

It localises to the cytoplasm. The catalysed reaction is cytidine(32) in tRNA + S-sulfanyl-L-cysteinyl-[cysteine desulfurase] + AH2 + ATP = 2-thiocytidine(32) in tRNA + L-cysteinyl-[cysteine desulfurase] + A + AMP + diphosphate + H(+). Its pathway is tRNA modification. In terms of biological role, catalyzes the ATP-dependent 2-thiolation of cytidine in position 32 of tRNA, to form 2-thiocytidine (s(2)C32). The sulfur atoms are provided by the cysteine/cysteine desulfurase (IscS) system. This chain is tRNA-cytidine(32) 2-sulfurtransferase, found in Brucella anthropi (strain ATCC 49188 / DSM 6882 / CCUG 24695 / JCM 21032 / LMG 3331 / NBRC 15819 / NCTC 12168 / Alc 37) (Ochrobactrum anthropi).